A 421-amino-acid chain; its full sequence is Glutamyl-tRNA reductase (421 aa).

Substrate is bound by residues 49 to 52, S109, 114 to 116, and Q120; these read TCNR and EPQ. The Nucleophile role is filled by C50. NADP(+) is bound at residue 189 to 194; sequence GAGKMS.

It belongs to the glutamyl-tRNA reductase family. In terms of assembly, homodimer.

The catalysed reaction is (S)-4-amino-5-oxopentanoate + tRNA(Glu) + NADP(+) = L-glutamyl-tRNA(Glu) + NADPH + H(+). It participates in porphyrin-containing compound metabolism; protoporphyrin-IX biosynthesis; 5-aminolevulinate from L-glutamyl-tRNA(Glu): step 1/2. In terms of biological role, catalyzes the NADPH-dependent reduction of glutamyl-tRNA(Glu) to glutamate 1-semialdehyde (GSA). The protein is Glutamyl-tRNA reductase of Solibacter usitatus (strain Ellin6076).